The sequence spans 118 residues: UPF0102 protein CHY_1414 (118 aa).

Belongs to the UPF0102 family.

In Carboxydothermus hydrogenoformans (strain ATCC BAA-161 / DSM 6008 / Z-2901), this protein is UPF0102 protein CHY_1414.